The sequence spans 514 residues: MQQLNPAEISNLIKQRIQDLDAGATAKNEGTIVKVSDGIVQIHGLEDAMYGEMIEFEGEVYGMALNLERDSVGAVVLGDFLKLQEGQKAYCTGRILEVPVGPELLGRVVDALGNPIDGKGPINAKMTDKVEKIAPGVIDRQSVDQPVMTGYKSVDTMIPIGRGQRELIIGDRQTGKTAMAIDAIIAQKSSGIKCVYVAIGQKRSTIANVVRKLEQTGALEYTTVVVASASEPAALQYIAPYSGCTMGEYFRDRGEDALIVFDDLSKQAVAYRQISLLLRRPPGREAYPGDVFYLHSRLLERASRVNAAYVEKFTNGEVVGKTGSLTALPIIETQAGDVSAFVPTNVISITDGQIFLESSLFNSGIRPAVNAGISVSRVGGAAQTKIIKKLSGGIRTALAQYRELAAFAQFASDLDDVTREQLDHGERVTELMKQKQYQPMSISEQAAVIYASNEGFLADVPVEKIGSFEEAYLRYMHDEQADLMKEIDDTANYNDDIAGRLKSSLETFKQNHSY.

170-177 (GDRQTGKT) contributes to the ATP binding site.

It belongs to the ATPase alpha/beta chains family. In terms of assembly, F-type ATPases have 2 components, CF(1) - the catalytic core - and CF(0) - the membrane proton channel. CF(1) has five subunits: alpha(3), beta(3), gamma(1), delta(1), epsilon(1). CF(0) has three main subunits: a(1), b(2) and c(9-12). The alpha and beta chains form an alternating ring which encloses part of the gamma chain. CF(1) is attached to CF(0) by a central stalk formed by the gamma and epsilon chains, while a peripheral stalk is formed by the delta and b chains.

It is found in the cell inner membrane. It carries out the reaction ATP + H2O + 4 H(+)(in) = ADP + phosphate + 5 H(+)(out). Functionally, produces ATP from ADP in the presence of a proton gradient across the membrane. The alpha chain is a regulatory subunit. In Psychrobacter cryohalolentis (strain ATCC BAA-1226 / DSM 17306 / VKM B-2378 / K5), this protein is ATP synthase subunit alpha.